The following is an 833-amino-acid chain: Mannosyl-oligosaccharide glucosidase (833 aa).

Residues 1–10 are Cytoplasmic-facing; sequence MLISKSKMFK. Residues 11–28 form a helical; Signal-anchor for type II membrane protein membrane-spanning segment; it reads TFWILTSIVLLASATVDI. Residues 29–833 lie on the Lumenal side of the membrane; the sequence is SKLQEFEEYQ…ALVVNILGRF (805 aa). The substrate site is built by asparagine 42 and asparagine 122. N-linked (GlcNAc...) asparagine glycans are attached at residues asparagine 42, asparagine 122, and asparagine 135. Residue glutamate 143 participates in substrate binding. Aspartate 601 acts as the Proton donor in catalysis. Cysteine 669 and cysteine 685 are joined by a disulfide. An N-linked (GlcNAc...) asparagine glycan is attached at asparagine 787. The active-site Proton acceptor is the glutamate 804.

This sequence belongs to the glycosyl hydrolase 63 family. N-glycosylated.

The protein localises to the endoplasmic reticulum membrane. The catalysed reaction is N(4)-(alpha-D-Glc-(1-&gt;2)-alpha-D-Glc-(1-&gt;3)-alpha-D-Glc-(1-&gt;3)-alpha-D-Man-(1-&gt;2)-alpha-D-Man-(1-&gt;2)-alpha-D-Man-(1-&gt;3)-[alpha-D-Man-(1-&gt;2)-alpha-D-Man-(1-&gt;3)-[alpha-D-Man-(1-&gt;2)-alpha-D-Man-(1-&gt;6)]-alpha-D-Man-(1-&gt;6)]-beta-D-Man-(1-&gt;4)-beta-D-GlcNAc-(1-&gt;4)-beta-D-GlcNAc)-L-asparaginyl-[protein] + H2O = N(4)-(alpha-D-Glc-(1-&gt;3)-alpha-D-Glc-(1-&gt;3)-alpha-D-Man-(1-&gt;2)-alpha-D-Man-(1-&gt;2)-alpha-D-Man-(1-&gt;3)-[alpha-D-Man-(1-&gt;2)-alpha-D-Man-(1-&gt;3)-[alpha-D-Man-(1-&gt;2)-alpha-D-Man-(1-&gt;6)]-alpha-D-Man-(1-&gt;6)]-beta-D-Man-(1-&gt;4)-beta-D-GlcNAc-(1-&gt;4)-beta-D-GlcNAc)-L-asparaginyl-[protein] + beta-D-glucose. It participates in glycan metabolism; N-glycan degradation. With respect to regulation, miglitol is an effective inhibitor at 1 mM. Its function is as follows. Cleaves the distal alpha 1,2-linked glucose residue from the Glc(3)Man(9)GlcNAc(2) oligosaccharide precursor highly specifically. Seems to play a role in beta-1,6-glucan synthesis. The chain is Mannosyl-oligosaccharide glucosidase (CWH41) from Saccharomyces cerevisiae (strain ATCC 204508 / S288c) (Baker's yeast).